The chain runs to 745 residues: 5-methyltetrahydropteroyltriglutamate--homocysteine methyltransferase (745 aa).

5-methyltetrahydropteroyltri-L-glutamate-binding positions include 19 to 22 (RELK) and K119. Residues 418 to 420 (IGS) and E471 each bind L-homocysteine. L-methionine contacts are provided by residues 418–420 (IGS) and E471. 5-methyltetrahydropteroyltri-L-glutamate is bound by residues 502 to 503 (RC) and W548. D586 contacts L-homocysteine. Residue D586 participates in L-methionine binding. Residue E592 coordinates 5-methyltetrahydropteroyltri-L-glutamate. 3 residues coordinate Zn(2+): H628, C630, and E652. H681 acts as the Proton donor in catalysis. A Zn(2+)-binding site is contributed by C713.

It belongs to the vitamin-B12 independent methionine synthase family. It depends on Zn(2+) as a cofactor.

The enzyme catalyses 5-methyltetrahydropteroyltri-L-glutamate + L-homocysteine = tetrahydropteroyltri-L-glutamate + L-methionine. It functions in the pathway amino-acid biosynthesis; L-methionine biosynthesis via de novo pathway; L-methionine from L-homocysteine (MetE route): step 1/1. Its function is as follows. Catalyzes the transfer of a methyl group from 5-methyltetrahydrofolate to homocysteine resulting in methionine formation. This chain is 5-methyltetrahydropteroyltriglutamate--homocysteine methyltransferase, found in Corynebacterium glutamicum (strain R).